A 135-amino-acid polypeptide reads, in one-letter code: Transcriptional regulator HosA (135 aa).

Positions 4–134 (RNKAFHQLRQ…FMQLVRKMMN (131 aa)) constitute an HTH marR-type domain. The H-T-H motif DNA-binding region spans 48–71 (QVALIEAAVSTKATLAEMLARMEN).

In terms of biological role, involved in the temperature-dependent positive control of flagellum-driven swimming motility and cellular aggregation. Regulates fliC expression by directly interacting with fliC promoter. In Escherichia coli O111:H-, this protein is Transcriptional regulator HosA (hosA).